We begin with the raw amino-acid sequence, 355 residues long: MQEMQARAQALISESALRSNLTALARQAGTQLLLPVKADAYGHGMEIVARLAARHPAVWGFAVAVPREAATLAALGLGKPILLLTPPTLEEMGPLADLGVRLPVASLAEAEALPAHARAHLKVDTGMNRLGARPEEAVRVGQRLAERGLLEGAYTHFATADEPDLSFARQQFARFQEVLAALPPVLAHAANGGGVLSFGPLPSLSLARPGLASYGFAPAHLRGVAPLTPVMTLQARVTHVHAVYPGESVSYGGLWRATRKTIVATVGIGYADGYPRNATGKACVLVRGECRPVLGRICMDQCMVDVTDLEVRVGDWVEVWGTDKITVTDVAAWGGTVEYEVLTGLGARVERVAAG.

The active-site Proton acceptor; specific for D-alanine is lysine 37. Lysine 37 carries the N6-(pyridoxal phosphate)lysine modification. Residue arginine 129 coordinates substrate. The active-site Proton acceptor; specific for L-alanine is the tyrosine 251. Methionine 299 serves as a coordination point for substrate.

This sequence belongs to the alanine racemase family. Pyridoxal 5'-phosphate serves as cofactor.

The enzyme catalyses L-alanine = D-alanine. The protein operates within amino-acid biosynthesis; D-alanine biosynthesis; D-alanine from L-alanine: step 1/1. Functionally, catalyzes the interconversion of L-alanine and D-alanine. May also act on other amino acids. In Deinococcus geothermalis (strain DSM 11300 / CIP 105573 / AG-3a), this protein is Alanine racemase (alr).